We begin with the raw amino-acid sequence, 493 residues long: E3 ubiquitin-protein ligase TRIM35 (493 aa).

M1 bears the N-acetylmethionine mark. A phosphoserine mark is found at S4 and S8. The RING-type zinc-finger motif lies at 21 to 61 (CAVCYDPFRDAVTLRCGHNFCRGCVSRCWEVQVSPTCPVCK). The segment at 96 to 137 (RFSRVCRLHRGQLSLFCLEDKELLCCSCQADPRHQGHRVQPV) adopts a B box-type zinc-finger fold. Residues C101, H104, C123, and H129 each coordinate Zn(2+). A coiled-coil region spans residues 210–251 (AEETRQKQLLADEKMKQLTEETEVLAHEIERLQMEMKEDDVS). Residues 284–487 (LGSLQYRVWK…LRICPLHISV (204 aa)) enclose the B30.2/SPRY domain.

It belongs to the TRIM/RBCC family. As to quaternary structure, interacts with PKM isoform M2, but not isoform M1; this interaction may compete with that between PKM and FGFR1, and hence reduces FGFR1-dependent tyrosine phosphorylation of PKM. Interacts with IRF7; this interaction promotes IRF7 proteasomal degradation. Interacts with TRAF3; this interaction promotes TRAF3 activation.

It localises to the cytoplasm. The protein resides in the nucleus. The catalysed reaction is S-ubiquitinyl-[E2 ubiquitin-conjugating enzyme]-L-cysteine + [acceptor protein]-L-lysine = [E2 ubiquitin-conjugating enzyme]-L-cysteine + N(6)-ubiquitinyl-[acceptor protein]-L-lysine.. It participates in protein modification; protein ubiquitination. Its function is as follows. E3 ubiquitin-protein ligase that participates in multiple biological processes including cell death, glucose metabolism, and in particular, the innate immune response. Mediates 'Lys-63'-linked polyubiquitination of TRAF3 thereby promoting type I interferon production via RIG-I signaling pathway. Can also catalyze 'Lys-48'-linked polyubiquitination and proteasomal degradation of viral proteins such as influenza virus PB2. Acts as a negative feedback regulator of TLR7- and TLR9-triggered signaling. Mechanistically, promotes the 'Lys-48'-linked ubiquitination of IRF7 and induces its degradation via a proteasome-dependent pathway. Reduces FGFR1-dependent tyrosine phosphorylation of PKM, inhibiting PKM-dependent lactate production, glucose metabolism, and cell growth. In Homo sapiens (Human), this protein is E3 ubiquitin-protein ligase TRIM35 (TRIM35).